Here is a 197-residue protein sequence, read N- to C-terminus: Imidazoleglycerol-phosphate dehydratase (197 aa).

The protein belongs to the imidazoleglycerol-phosphate dehydratase family.

Its subcellular location is the cytoplasm. The enzyme catalyses D-erythro-1-(imidazol-4-yl)glycerol 3-phosphate = 3-(imidazol-4-yl)-2-oxopropyl phosphate + H2O. Its pathway is amino-acid biosynthesis; L-histidine biosynthesis; L-histidine from 5-phospho-alpha-D-ribose 1-diphosphate: step 6/9. The polypeptide is Imidazoleglycerol-phosphate dehydratase (Azorhizobium caulinodans (strain ATCC 43989 / DSM 5975 / JCM 20966 / LMG 6465 / NBRC 14845 / NCIMB 13405 / ORS 571)).